Consider the following 502-residue polypeptide: ATP synthase subunit alpha (502 aa).

169-176 provides a ligand contact to ATP; the sequence is GDRQTGKT.

The protein belongs to the ATPase alpha/beta chains family. In terms of assembly, F-type ATPases have 2 components, CF(1) - the catalytic core - and CF(0) - the membrane proton channel. CF(1) has five subunits: alpha(3), beta(3), gamma(1), delta(1), epsilon(1). CF(0) has three main subunits: a(1), b(2) and c(9-12). The alpha and beta chains form an alternating ring which encloses part of the gamma chain. CF(1) is attached to CF(0) by a central stalk formed by the gamma and epsilon chains, while a peripheral stalk is formed by the delta and b chains.

The protein localises to the cell inner membrane. The catalysed reaction is ATP + H2O + 4 H(+)(in) = ADP + phosphate + 5 H(+)(out). In terms of biological role, produces ATP from ADP in the presence of a proton gradient across the membrane. The alpha chain is a regulatory subunit. This Thermodesulfovibrio yellowstonii (strain ATCC 51303 / DSM 11347 / YP87) protein is ATP synthase subunit alpha.